Here is a 505-residue protein sequence, read N- to C-terminus: Glutamyl-tRNA(Gln) amidotransferase subunit B, mitochondrial (505 aa).

The protein belongs to the GatB/GatE family. GatB subfamily. Subunit of the heterotrimeric GatCAB amidotransferase (AdT) complex, composed of A, B and C subunits.

Its subcellular location is the mitochondrion. The catalysed reaction is L-glutamyl-tRNA(Gln) + L-glutamine + ATP + H2O = L-glutaminyl-tRNA(Gln) + L-glutamate + ADP + phosphate + H(+). Functionally, allows the formation of correctly charged Gln-tRNA(Gln) through the transamidation of misacylated Glu-tRNA(Gln) in the mitochondria. The reaction takes place in the presence of glutamine and ATP through an activated gamma-phospho-Glu-tRNA(Gln). In Schizosaccharomyces japonicus (strain yFS275 / FY16936) (Fission yeast), this protein is Glutamyl-tRNA(Gln) amidotransferase subunit B, mitochondrial.